The sequence spans 2566 residues: Zinc finger protein GLI1 (2566 aa).

3 disordered regions span residues 349-375 (HHSS…SQSS), 430-508 (DIRR…RSTG), and 985-1046 (KSIE…GDPD). 2 stretches are compositionally biased toward polar residues: residues 434-444 (TLSSNGNSSHT) and 457-492 (WSPN…YQQH). Low complexity predominate over residues 493–508 (SGYTSTSGSSGNRSTG). Residues 993–1016 (WQNQNVFSSRRNSTRDPSNNNNSG) are compositionally biased toward polar residues. A compositionally biased stretch (acidic residues) spans 1023-1035 (DEPDVDDDEELDD). Residues 1088–1110 (RECVRGTRPFKAQYMLVVHMRRH) form a C2H2-type 1; degenerate zinc finger. 3 C2H2-type zinc fingers span residues 1116 to 1140 (HKCI…LRSH), 1146 to 1171 (YQCE…NRTH), and 1177 to 1202 (YTCK…KTVH). 5 disordered regions span residues 1254–1313 (GNSN…PRDS), 1465–1491 (LSTT…TKQK), 1650–1677 (SKNM…NQNE), 1727–1791 (AAAS…MDND), and 2067–2091 (MHFS…NRPH). 2 stretches are compositionally biased toward low complexity: residues 1661 to 1677 (NNNE…NQNE) and 1727 to 1743 (AAAS…TTAS). Over residues 1752 to 1769 (NHHHQKQQPKHSHQHQNR) the composition is skewed to basic residues. Residues 1770–1791 (TKSINSDNNYSNQDNVSTMDND) are compositionally biased toward polar residues. Positions 2070-2090 (SPHSYVHSSSSNSSPFNSNRP) are enriched in low complexity.

The protein belongs to the GLI C2H2-type zinc-finger protein family. In terms of tissue distribution, expressed in female-paired or unpaired males along the ventral surface in neurons and skin tegument cells. In virgin and mature females, expressed bilaterally along the edges of the body in neurons. In mature females, also expressed in skin tegument cells.

The protein resides in the nucleus. In terms of biological role, probable transcription factor which plays an essential role in males to trigger female sexual development by inducing NRPS expression in male. NRPS produces the pheromone beta-alanyl-tryptamine (BATT), which stimulates female sexual development. This chain is Zinc finger protein GLI1, found in Schistosoma mansoni (Blood fluke).